Consider the following 222-residue polypeptide: MSNLYGDYNQKIDYVFKVVLIGDSAVGKTQLLARFARNEFSVDSKATIGVEFQTKTLVIDNKTVKAQIWDTAGQERYRAVTSAYYRGAVGAMLVYDMTKRQSFDHMAKWLEELRGHADKNIVIMLIGNKCDLGSLRAVPTEDAQEFAQRENLFFMETSALEATNVETAFLTILTEIYRIISKKSLTADDDDADGNSSLLKGTRIIIPSEQESGKRGGCCGKS.

Residue 22-29 (GDSAVGKT) coordinates GTP. Positions 44–52 (SKATIGVEF) match the Effector region motif. GTP-binding positions include 70–74 (DTAGQ), 128–131 (NKCD), and 158–159 (SA). Residues C218 and C219 are each lipidated (S-geranylgeranyl cysteine).

The protein belongs to the small GTPase superfamily. Rab family. As to quaternary structure, interacts with PI4KB1. Specifically expressed in pollen and localized to the tips of growing pollen tubes.

It localises to the cytoplasmic vesicle membrane. In terms of biological role, intracellular vesicle trafficking and protein transport. Plays an important role in the regulation of pollen tube tip growth. The polypeptide is Ras-related protein RABA4d (RABA4D) (Arabidopsis thaliana (Mouse-ear cress)).